The following is a 239-amino-acid chain: Protein GrpE (239 aa).

2 disordered regions span residues 1 to 56 and 208 to 239; these read MIEN…KNTI and SMGPGKQNSQQEVEKDTVEEDVNSEVNTSEDV. The span at 40-53 shows a compositional bias: basic and acidic residues; sequence TSQKKEAINTEELK. Acidic residues predominate over residues 224–239; the sequence is TVEEDVNSEVNTSEDV.

This sequence belongs to the GrpE family. In terms of assembly, homodimer.

The protein localises to the cytoplasm. Its function is as follows. Participates actively in the response to hyperosmotic and heat shock by preventing the aggregation of stress-denatured proteins, in association with DnaK and GrpE. It is the nucleotide exchange factor for DnaK and may function as a thermosensor. Unfolded proteins bind initially to DnaJ; upon interaction with the DnaJ-bound protein, DnaK hydrolyzes its bound ATP, resulting in the formation of a stable complex. GrpE releases ADP from DnaK; ATP binding to DnaK triggers the release of the substrate protein, thus completing the reaction cycle. Several rounds of ATP-dependent interactions between DnaJ, DnaK and GrpE are required for fully efficient folding. In Prochlorococcus marinus (strain MIT 9215), this protein is Protein GrpE.